A 343-amino-acid polypeptide reads, in one-letter code: Calcium/calmodulin-dependent protein kinase type 1B (343 aa).

Residues 15–270 (YEIRERLGSG…CQQALRHLWI (256 aa)) enclose the Protein kinase domain. Residues 21–29 (LGSGAFSEV) and Lys-44 each bind ATP. Asp-136 (proton acceptor) is an active-site residue. The tract at residues 290-311 (KNFARTHWKRAFNATSFLRHIR) is calmodulin-binding. Residues 319 to 343 (GEGASEQGMARHSHSGLRAGQPPKW) are disordered.

Belongs to the protein kinase superfamily. CAMK Ser/Thr protein kinase family. CaMK subfamily. Post-translationally, phosphorylated by CAMKK1.

It localises to the cytoplasm. It is found in the nucleus. The catalysed reaction is L-seryl-[protein] + ATP = O-phospho-L-seryl-[protein] + ADP + H(+). The enzyme catalyses L-threonyl-[protein] + ATP = O-phospho-L-threonyl-[protein] + ADP + H(+). Activated by Ca(2+)/calmodulin. Calcium/calmodulin-dependent protein kinase belonging to a proposed calcium-triggered signaling cascade. In vitro phosphorylates CREB1 and SYN1/synapsin I. Phosphorylates and activates CAMK1. This is Calcium/calmodulin-dependent protein kinase type 1B (PNCK) from Homo sapiens (Human).